The following is a 242-amino-acid chain: 1-(5-phosphoribosyl)-5-[(5-phosphoribosylamino)methylideneamino] imidazole-4-carboxamide isomerase (242 aa).

Asp8 functions as the Proton acceptor in the catalytic mechanism. Asp129 serves as the catalytic Proton donor.

The protein belongs to the HisA/HisF family.

It is found in the cytoplasm. The catalysed reaction is 1-(5-phospho-beta-D-ribosyl)-5-[(5-phospho-beta-D-ribosylamino)methylideneamino]imidazole-4-carboxamide = 5-[(5-phospho-1-deoxy-D-ribulos-1-ylimino)methylamino]-1-(5-phospho-beta-D-ribosyl)imidazole-4-carboxamide. Its pathway is amino-acid biosynthesis; L-histidine biosynthesis; L-histidine from 5-phospho-alpha-D-ribose 1-diphosphate: step 4/9. The chain is 1-(5-phosphoribosyl)-5-[(5-phosphoribosylamino)methylideneamino] imidazole-4-carboxamide isomerase from Erythrobacter litoralis (strain HTCC2594).